An 812-amino-acid chain; its full sequence is Valine--tRNA ligase (812 aa).

The short motif at 46-56 (PTVSGQLHIGH) is the 'HIGH' region element. The 'KMSKS' region motif lies at 536 to 540 (KMSKS). Lys539 is a binding site for ATP.

Belongs to the class-I aminoacyl-tRNA synthetase family. ValS type 2 subfamily. As to quaternary structure, monomer.

It is found in the cytoplasm. It carries out the reaction tRNA(Val) + L-valine + ATP = L-valyl-tRNA(Val) + AMP + diphosphate. Functionally, catalyzes the attachment of valine to tRNA(Val). As ValRS can inadvertently accommodate and process structurally similar amino acids such as threonine, to avoid such errors, it has a 'posttransfer' editing activity that hydrolyzes mischarged Thr-tRNA(Val) in a tRNA-dependent manner. This Rickettsia akari (strain Hartford) protein is Valine--tRNA ligase.